Reading from the N-terminus, the 663-residue chain is MKLIEDLIEKLNKYSYSYYVLDNPIVADKEYDIMYDELKRLEEETEYINPNSPTQRVGDIILDKFEKTHHKNKLWSLDKAQKKDEVKAFVNKCVKFVEQYNLTHSEKLPSPQFVVTQKLDGLTINCSYNESRLIKSATRGTGEIGEDITEQSKTILNLPNAINYSGEIDVHGEALMTKNALEQYNSNLKVNETPLKNLRNGAAGALRNLNIKETARRKLVAQFYDLSYTDKKLKKYSEILLFLKSQGFNITEYNICNNFDEINQAIDNIGEVRSSLQYDIDGVVIRLNDIETSRLMGYTIKCPKYAIAYKFKAKETTTKLIDVEWNVGRSGRINPTAILEPVELAGVIVKRATLNNMDDIKRKKIKKGARVFLRRSNDVIPEIMGVTEETEGETKEIEAPTICPYCGSEIVKEGVHLFCENTLSCKPQMVKSIVHFASRKAMNIEGFSEKTAEQLFEKLNIKSISDLYRITKEELMSLDKFKDKKASNLINAIEKSKECDLDSFVYSLGIPNVGKKTATDLCKQFKSFENIKKASYFELILVQDIGSIVAKSIVDFFKQEKIEKSLNELFKLGVKPSYEESEVSESVFNDKTVVATGSLQNYSRTEIKEKLESLGAKVAGSVSKKTDYVIAGENAGSKYDKAVALGVKILTEEKFEELIESVK.

Residues 28–32 and 76–77 each bind NAD(+); these read DKEYD and SL. Lys118 functions as the N6-AMP-lysine intermediate in the catalytic mechanism. Residues Arg139, Glu173, and Lys310 each contribute to the NAD(+) site. Cys403, Cys406, Cys419, and Cys425 together coordinate Zn(2+). One can recognise a BRCT domain in the interval 583–663; it reads VSESVFNDKT…KFEELIESVK (81 aa).

Belongs to the NAD-dependent DNA ligase family. LigA subfamily. Requires Mg(2+) as cofactor. The cofactor is Mn(2+).

The catalysed reaction is NAD(+) + (deoxyribonucleotide)n-3'-hydroxyl + 5'-phospho-(deoxyribonucleotide)m = (deoxyribonucleotide)n+m + AMP + beta-nicotinamide D-nucleotide.. DNA ligase that catalyzes the formation of phosphodiester linkages between 5'-phosphoryl and 3'-hydroxyl groups in double-stranded DNA using NAD as a coenzyme and as the energy source for the reaction. It is essential for DNA replication and repair of damaged DNA. The chain is DNA ligase 1 from Clostridium acetobutylicum (strain ATCC 824 / DSM 792 / JCM 1419 / IAM 19013 / LMG 5710 / NBRC 13948 / NRRL B-527 / VKM B-1787 / 2291 / W).